The following is a 162-amino-acid chain: Ribosome maturation factor RimP (162 aa).

Belongs to the RimP family.

It is found in the cytoplasm. In terms of biological role, required for maturation of 30S ribosomal subunits. In Cupriavidus taiwanensis (strain DSM 17343 / BCRC 17206 / CCUG 44338 / CIP 107171 / LMG 19424 / R1) (Ralstonia taiwanensis (strain LMG 19424)), this protein is Ribosome maturation factor RimP.